The chain runs to 279 residues: Dihydropteroate synthase type-1 (279 aa).

One can recognise a Pterin-binding domain in the interval 1 to 258 (MVTVFGILNL…APGDLRSAIT (258 aa)). Mg(2+) is bound at residue Asn-9. Residues Asp-82, Asn-101, Asp-173, Lys-212, and 246–248 (RTH) each bind (7,8-dihydropterin-6-yl)methyl diphosphate.

It belongs to the DHPS family. Homodimer or homotrimer. Mg(2+) serves as cofactor.

It catalyses the reaction (7,8-dihydropterin-6-yl)methyl diphosphate + 4-aminobenzoate = 7,8-dihydropteroate + diphosphate. Its pathway is cofactor biosynthesis; tetrahydrofolate biosynthesis; 7,8-dihydrofolate from 2-amino-4-hydroxy-6-hydroxymethyl-7,8-dihydropteridine diphosphate and 4-aminobenzoate: step 1/2. Catalyzes the condensation of para-aminobenzoate (pABA) with 6-hydroxymethyl-7,8-dihydropterin diphosphate (DHPt-PP) to form 7,8-dihydropteroate (H2Pte), the immediate precursor of folate derivatives. In Corynebacterium glutamicum (Brevibacterium saccharolyticum), this protein is Dihydropteroate synthase type-1 (sulI).